The sequence spans 172 residues: C-phycocyanin beta chain (172 aa).

Asn72 is subject to N4-methylasparagine. The (2R,3E)-phycocyanobilin site is built by Cys82 and Cys153.

This sequence belongs to the phycobiliprotein family. Heterodimer of an alpha and a beta subunit, which further assembles into trimers and the trimers into hexamers. The basic functional unit of phycobiliproteins is a ring-shaped hexamer formed from two back-to-back trimers contacting via the alpha chain subunits. The trimers are composed of alpha/beta subunit heterodimers arranged around a three-fold axis of symmetry. The phycoerythrins also contain a gamma subunit which is located in the center of the hexamer. In terms of processing, contains two covalently linked bilin chromophores.

Its subcellular location is the plastid. The protein resides in the chloroplast thylakoid membrane. In terms of biological role, light-harvesting photosynthetic bile pigment-protein from the phycobiliprotein complex (phycobilisome, PBS). Phycocyanin is the major phycobiliprotein in the PBS rod. This Rhodella violacea (Red alga) protein is C-phycocyanin beta chain (cpcB).